A 348-amino-acid polypeptide reads, in one-letter code: (+)-germacrene D synthase (348 aa).

Residues Asp97, Asp101, Asn242, and Ser246 each contribute to the Mg(2+) site. The DDXXD motif motif lies at 97-101; it reads DDILD.

It belongs to the terpene synthase family. Mg(2+) is required as a cofactor.

It catalyses the reaction (2E,6E)-farnesyl diphosphate = (+)-germacrene D + diphosphate. It functions in the pathway secondary metabolite biosynthesis; terpenoid biosynthesis. In terms of biological role, sesquiterpene synthase converting farnesyl diphosphate to eight sesquiterpenes, with (+)-germacrene D and an unidentified oxygenated sesquiterpene as the major products. Has no diterpene synthase activity. The sequence is that of (+)-germacrene D synthase from Selaginella moellendorffii (Spikemoss).